Here is a 290-residue protein sequence, read N- to C-terminus: Programmed cell death 1 ligand 1 (290 aa).

The signal sequence occupies residues 1 to 18 (MRIFAGIIFTACCHLLRA). Residues 19-127 (FTITAPKDLY…YGGADYKRIT (109 aa)) enclose the Ig-like V-type domain. Topologically, residues 19–239 (FTITAPKDLY…ATHPPQNRTH (221 aa)) are extracellular. Residue asparagine 35 is glycosylated (N-linked (GlcNAc...) asparagine). Disulfide bonds link cysteine 40–cysteine 114 and cysteine 154–cysteine 208. The Ig-like C2-type domain occupies 133–224 (PYRKINQRIS…PGQNHTAELI (92 aa)). Residues asparagine 191, asparagine 199, asparagine 218, and asparagine 236 are each glycosylated (N-linked (GlcNAc...) asparagine). A helical membrane pass occupies residues 240–260 (WVLLGSILLFLIVVSTVLLFL). Topologically, residues 261–290 (RKQVRMLDVEKCGVEDTSSKNRNDTQFEET) are cytoplasmic.

This sequence belongs to the immunoglobulin superfamily. BTN/MOG family. Interacts with PDCD1. Interacts with CMTM4 and CMTM6. Interacts with CD80. Post-translationally, ubiquitinated; STUB1 likely mediates polyubiquitination of PD-L1/CD274 triggering its degradation. Ubiquitinated by MARCHF8; leading to degradation. Deubiquitinated by USP22; leading to stabilization. Highly expressed in the heart, thymus, skeletal muscle, and lung. Weakly expressed in the kidney, spleen, thyroid, and liver. Expressed on activated dendritic cells, B-cells and macrophages. Expressed in numerous tumor cells lines of lymphoid origin.

It is found in the cell membrane. The protein localises to the early endosome membrane. The protein resides in the recycling endosome membrane. Functionally, plays a critical role in induction and maintenance of immune tolerance to self. As a ligand for the inhibitory receptor PDCD1/PD-1, modulates the activation threshold of T-cells and limits T-cell effector response. Through a yet unknown activating receptor, may costimulate T-cell subsets that predominantly produce interleukin-10 (IL10). Its function is as follows. The PDCD1-mediated inhibitory pathway is exploited by tumors to attenuate anti-tumor immunity and escape destruction by the immune system, thereby facilitating tumor survival. The interaction with PDCD1/PD-1 inhibits cytotoxic T lymphocytes (CTLs) effector function. The blockage of the PDCD1-mediated pathway results in the reversal of the exhausted T-cell phenotype and the normalization of the anti-tumor response, providing a rationale for cancer immunotherapy. This chain is Programmed cell death 1 ligand 1 (Cd274), found in Mus musculus (Mouse).